A 337-amino-acid chain; its full sequence is NADH-quinone oxidoreductase subunit H (337 aa).

The next 8 helical transmembrane spans lie at Ile-13–Leu-33, Ala-82–Ile-102, Val-115–Gly-135, Met-154–Ser-174, Gly-187–Ala-207, Ile-248–Ile-268, Ile-274–Val-294, and Val-313–Asp-333.

Belongs to the complex I subunit 1 family. NDH-1 is composed of 14 different subunits. Subunits NuoA, H, J, K, L, M, N constitute the membrane sector of the complex.

It is found in the cell inner membrane. It carries out the reaction a quinone + NADH + 5 H(+)(in) = a quinol + NAD(+) + 4 H(+)(out). Functionally, NDH-1 shuttles electrons from NADH, via FMN and iron-sulfur (Fe-S) centers, to quinones in the respiratory chain. The immediate electron acceptor for the enzyme in this species is believed to be ubiquinone. Couples the redox reaction to proton translocation (for every two electrons transferred, four hydrogen ions are translocated across the cytoplasmic membrane), and thus conserves the redox energy in a proton gradient. This subunit may bind ubiquinone. The polypeptide is NADH-quinone oxidoreductase subunit H (Rhodospirillum rubrum (strain ATCC 11170 / ATH 1.1.1 / DSM 467 / LMG 4362 / NCIMB 8255 / S1)).